Reading from the N-terminus, the 564-residue chain is Arrestin domain-containing protein E (564 aa).

The span at 74 to 146 (SQQPQSSQPS…NTSNGFSPPN (73 aa)) shows a compositional bias: low complexity. 2 disordered regions span residues 74 to 150 (SQQP…LNKN) and 245 to 286 (ASQP…SFPS). A compositionally biased stretch (pro residues) spans 250-259 (PQQPQQPQPQ). The segment covering 260-269 (QPQQQQFQQQ) has biased composition (low complexity). Polar residues predominate over residues 270–285 (SYNNNNSTQSMLSSFP). Positions 348–413 (DKCAACDALL…PMCFESTTGL (66 aa)) constitute an LIM zinc-binding domain.

The protein is Arrestin domain-containing protein E (adcE) of Dictyostelium discoideum (Social amoeba).